The chain runs to 597 residues: Mediator of RNA polymerase II transcription subunit 26 (597 aa).

Residues 10 to 87 form the TFIIS N-terminal domain; sequence EIRERLLQAI…RNWQKLIEPV (78 aa). Disordered regions lie at residues 96–236, 254–418, and 436–459; these read GIPN…VKHP, LDDA…ARVK, and TLKD…TDKQ. Residues 128-147 are compositionally biased toward basic and acidic residues; sequence QELKGRNDIQKAHSPKADKT. Positions 226–236 are enriched in polar residues; sequence HTNSPGLVKHP. Residues 262 to 273 are compositionally biased toward low complexity; sequence PRSPRCSSFSPR. Residues 321–338 show a composition bias toward basic and acidic residues; it reads KRLESPRQDRVSSPHKPV. A compositionally biased stretch (polar residues) spans 341–377; that stretch reads LPSTDCHQVLPRTSQQHIPRSSLVDSQTPRTGFSPES. Basic and acidic residues predominate over residues 450-459; it reads EQHRTETDKQ.

It belongs to the Mediator complex subunit 26 family. Component of the Mediator complex.

The protein resides in the nucleus. In terms of biological role, component of the Mediator complex, a coactivator involved in the regulated transcription of nearly all RNA polymerase II-dependent genes. Mediator functions as a bridge to convey information from gene-specific regulatory proteins to the basal RNA polymerase II transcription machinery. Mediator is recruited to promoters by direct interactions with regulatory proteins and serves as a scaffold for the assembly of a functional preinitiation complex with RNA polymerase II and the general transcription factors. The chain is Mediator of RNA polymerase II transcription subunit 26 (med26) from Xenopus laevis (African clawed frog).